We begin with the raw amino-acid sequence, 435 residues long: Enolase (435 aa).

Q167 lines the (2R)-2-phosphoglycerate pocket. Catalysis depends on E209, which acts as the Proton donor. 3 residues coordinate Mg(2+): D246, E292, and D319. Positions 344, 373, 374, and 395 each coordinate (2R)-2-phosphoglycerate. K344 functions as the Proton acceptor in the catalytic mechanism.

The protein belongs to the enolase family. Requires Mg(2+) as cofactor.

It is found in the cytoplasm. Its subcellular location is the secreted. It localises to the cell surface. It catalyses the reaction (2R)-2-phosphoglycerate = phosphoenolpyruvate + H2O. Its pathway is carbohydrate degradation; glycolysis; pyruvate from D-glyceraldehyde 3-phosphate: step 4/5. Functionally, catalyzes the reversible conversion of 2-phosphoglycerate (2-PG) into phosphoenolpyruvate (PEP). It is essential for the degradation of carbohydrates via glycolysis. This is Enolase from Lachnospira eligens (strain ATCC 27750 / DSM 3376 / VPI C15-48 / C15-B4) (Eubacterium eligens).